Consider the following 409-residue polypeptide: MDLKMLLIFIAFLLPSVLGFPIQDNYENSTATTESTQVTTEEDIYDSPSPAETDSEDELIFNRILEVNKDSSQYLQEGDIVPRRSRSAINCRNCYWPQSRDGIVRIPYVLDPTYEENHVKGIREAMAEFETLTCINFVKRKTERDYLIIRSADGCWSNYGKVGGGQTISVMKGGCMWKGIIQHELDHALGFLHEHSRSDRDKYVRIMWEYISPADRPDFKKFENSNNLGLPYDYSSVMHYGPHTFTNTTGKATIVPVPDGSVHIGQRLGLSNLDVAKINRLYNCSRCSTIIDAAFGSLKSANYPRNYSDNTNCVWLIRTRSRKISLHFRAFELRTTRGCQGDYVKVYDGSSKYSTVLMDKTCGSQIPTDVVSSSNLMLIEFVTDGADTASGFQATFTSAKIQRRFKIRN.

The N-terminal stretch at 1 to 19 (MDLKMLLIFIAFLLPSVLG) is a signal peptide. Low complexity predominate over residues 30-39 (TATTESTQVT). The disordered stretch occupies residues 30–54 (TATTESTQVTTEEDIYDSPSPAETD). Positions 87-285 (SAINCRNCYW…AKINRLYNCS (199 aa)) constitute a Peptidase M12A domain. Cystine bridges form between Cys-91–Cys-94, Cys-134–Cys-284, Cys-155–Cys-175, Cys-287–Cys-313, and Cys-339–Cys-362. His-183 contributes to the Zn(2+) binding site. Residue Glu-184 is part of the active site. Zn(2+)-binding residues include His-187 and His-193. Residues 287 to 399 (CSTIIDAAFG…SGFQATFTSA (113 aa)) enclose the CUB domain.

The cofactor is Zn(2+). Expressed in ovary and gonads.

The protein localises to the cytoplasm. It localises to the cell membrane. The protein resides in the cytoplasmic vesicle. It is found in the secretory vesicle. Its subcellular location is the cortical granule. Its function is as follows. Probable oocyte-specific oolemmal receptor involved in sperm and egg adhesion and fertilization. May act as a protease. This Gallus gallus (Chicken) protein is Astacin-like metalloendopeptidase (ASTL).